The following is a 267-amino-acid chain: MKKWIYVVLVLSIAGIGGFSVHAASSAHEKHLNVSKMNVDDEFKDTDGTFILHDLQKDQTFVYNRKRANQRQTPQSTFKVVNALIGLQVKAVRDEYDVKRWDGVKREFESWNRDHTLGSAMRESAIWYYQALARDIGEERMKTWLHTLSYGNEDISGGIDQFWLQSSLTISPLEQETFLEKLAKEELPFDKPVMKIVKRMMIQEEGDHYTLYGKTGTRLTDMGLGWFVGFIKTEHGSYVFVTNVDDSGTKAKNITVDILKKYGLITS.

Residues 1 to 23 (MKKWIYVVLVLSIAGIGGFSVHA) form the signal peptide. The Acyl-ester intermediate role is filled by serine 76. At lysine 79 the chain carries N6-carboxylysine. Position 214–216 (214–216 (KTG)) interacts with substrate.

The protein belongs to the class-D beta-lactamase family.

It catalyses the reaction a beta-lactam + H2O = a substituted beta-amino acid. The chain is Probable beta-lactamase YbxI (ybxI) from Bacillus subtilis (strain 168).